The sequence spans 616 residues: Probable Xaa-Pro aminopeptidase P (616 aa).

The Mn(2+) site is built by Asp413, Asp424, Glu522, and Glu536.

Belongs to the peptidase M24B family. Mn(2+) serves as cofactor.

It carries out the reaction Release of any N-terminal amino acid, including proline, that is linked to proline, even from a dipeptide or tripeptide.. Its function is as follows. Catalyzes the removal of a penultimate prolyl residue from the N-termini of peptides. The polypeptide is Probable Xaa-Pro aminopeptidase P (AMPP) (Paracoccidioides brasiliensis (strain Pb18)).